A 404-amino-acid chain; its full sequence is Propionate kinase (404 aa).

It belongs to the acetokinase family. PduW subfamily.

It is found in the cytoplasm. It catalyses the reaction propanoate + ATP = propanoyl phosphate + ADP. It participates in polyol metabolism; 1,2-propanediol degradation. Functionally, works with phosphate acetyltransferase (pta) to capture exogenous propionate and regenerate propionyl-CoA during degradation of 1,2-propanediol (1,2-PD). This is Propionate kinase from Klebsiella pneumoniae (strain 342).